We begin with the raw amino-acid sequence, 493 residues long: Cytochrome P450 monooxygenase astA (493 aa).

A helical transmembrane segment spans residues 5–25 (EIILLGLAALAVTYQVIVWIY). N-linked (GlcNAc...) asparagine glycans are attached at residues Asn174 and Asn286. Cys433 provides a ligand contact to heme.

This sequence belongs to the cytochrome P450 family. Heme is required as a cofactor.

The protein resides in the membrane. The catalysed reaction is asperterpenoid A + reduced [NADPH--hemoprotein reductase] + O2 = asperterpenoid C + oxidized [NADPH--hemoprotein reductase] + H2O + H(+). It functions in the pathway secondary metabolite biosynthesis; terpenoid biosynthesis. Cytochrome P450 monooxygenase; part of the gene cluster that mediates the biosynthesis of the asperterpenoids, sesterterpenes that exhibit anti-tuberculosis activity. The first step of the pathway is performed by the sesterterpene synthase astC that possesses both prenyl transferase and terpene cyclase activity, converting isopentenyl diphosphate and dimethylallyl diphosphate into geranylfarnesyl diphosphate (GFPP) and further converting GFPP into preasperterpenoid A, respectively. The cytochrome P450 monooxygenase astB then dually oxidizes preasperterpenoid A to produce asperterpenoid A along with a minor product, asperterpenoid B. Finally, the cytochrome P450 monooxygenase astA converts asperterpenoid A into asperterpenoid C. The chain is Cytochrome P450 monooxygenase astA from Talaromyces wortmannii (Penicillium wortmannii).